Consider the following 492-residue polypeptide: NADH-quinone oxidoreductase subunit N (492 aa).

Transmembrane regions (helical) follow at residues 13–33, 42–62, 79–99, 111–131, 133–153, 168–188, 211–231, 251–271, 284–304, 318–340, 344–366, 388–408, 426–446, and 463–483; these read MMTP…MDLF, PLAW…IGLI, FGKA…LLAF, GEFY…ASSG, LITL…LAGI, VING…IFGL, YILA…ISSV, FLSV…FITI, SLLF…MIIG, FAYS…SWVM, IWFY…QRIS, AVAM…AGFI, VLAA…FGIF, and PIGL…FGVV.

Belongs to the complex I subunit 2 family. As to quaternary structure, NDH-1 is composed of 14 different subunits. Subunits NuoA, H, J, K, L, M, N constitute the membrane sector of the complex.

It localises to the cell membrane. It catalyses the reaction a quinone + NADH + 5 H(+)(in) = a quinol + NAD(+) + 4 H(+)(out). NDH-1 shuttles electrons from NADH, via FMN and iron-sulfur (Fe-S) centers, to quinones in the respiratory chain. The immediate electron acceptor for the enzyme in this species is believed to be a menaquinone. Couples the redox reaction to proton translocation (for every two electrons transferred, four hydrogen ions are translocated across the cytoplasmic membrane), and thus conserves the redox energy in a proton gradient. In Geobacillus sp. (strain WCH70), this protein is NADH-quinone oxidoreductase subunit N.